A 193-amino-acid polypeptide reads, in one-letter code: Flagellar transcriptional regulator FlhC (193 aa).

Zn(2+)-binding residues include Cys-138, Cys-141, Cys-158, and Cys-161.

It belongs to the FlhC family. As to quaternary structure, heterohexamer composed of two FlhC and four FlhD subunits. Each FlhC binds a FlhD dimer, forming a heterotrimer, and a hexamer assembles by dimerization of two heterotrimers. Zn(2+) serves as cofactor.

The protein localises to the cytoplasm. In terms of biological role, functions in complex with FlhD as a master transcriptional regulator that regulates transcription of several flagellar and non-flagellar operons by binding to their promoter region. Activates expression of class 2 flagellar genes, including fliA, which is a flagellum-specific sigma factor that turns on the class 3 genes. Also regulates genes whose products function in a variety of physiological pathways. This Yersinia enterocolitica protein is Flagellar transcriptional regulator FlhC.